A 165-amino-acid polypeptide reads, in one-letter code: Large ribosomal subunit protein uL10 (165 aa).

Belongs to the universal ribosomal protein uL10 family. Part of the ribosomal stalk of the 50S ribosomal subunit. The N-terminus interacts with L11 and the large rRNA to form the base of the stalk. The C-terminus forms an elongated spine to which L12 dimers bind in a sequential fashion forming a multimeric L10(L12)X complex.

In terms of biological role, forms part of the ribosomal stalk, playing a central role in the interaction of the ribosome with GTP-bound translation factors. The polypeptide is Large ribosomal subunit protein uL10 (Pectobacterium atrosepticum (strain SCRI 1043 / ATCC BAA-672) (Erwinia carotovora subsp. atroseptica)).